A 440-amino-acid chain; its full sequence is Transposon Ty1-NL1 Gag polyprotein (440 aa).

Polar residues-rich tracts occupy residues 1-23 (MESQ…SVTS), 48-60 (TKAN…TPAS), 71-86 (SPQT…GPYQ), and 131-152 (PQYP…GNTF). 3 disordered regions span residues 1–86 (MESQ…GPYQ), 131–171 (PQYP…YVRP), and 350–425 (QQES…TEPI). The segment covering 153 to 165 (TDSSSADSDMTST) has biased composition (low complexity). The RNA-binding stretch occupies residues 299 to 401 (NNGIPINNKV…NSQSRTARAH (103 aa)). Residues 363-372 (NPSDEKKDSR) show a composition bias toward basic and acidic residues. A compositionally biased stretch (polar residues) spans 373–412 (TYTNTTKPKSITRNSQKPNNSQSRTARAHNVSTSNNSSGP).

In terms of assembly, homotrimer.

The protein resides in the cytoplasm. Capsid protein (CA) is the structural component of the virus-like particle (VLP), forming the shell that encapsulates the retrotransposons dimeric RNA genome. The particles are assembled from trimer-clustered units and there are holes in the capsid shells that allow for the diffusion of macromolecules. CA also has nucleocapsid-like chaperone activity, promoting primer tRNA(i)-Met annealing to the multipartite primer-binding site (PBS), dimerization of Ty1 RNA and initiation of reverse transcription. The polypeptide is Transposon Ty1-NL1 Gag polyprotein (TY1A-NL1) (Saccharomyces cerevisiae (strain ATCC 204508 / S288c) (Baker's yeast)).